A 276-amino-acid chain; its full sequence is 2-dehydro-3-deoxyphosphooctonate aldolase (276 aa).

It belongs to the KdsA family.

It localises to the cytoplasm. It carries out the reaction D-arabinose 5-phosphate + phosphoenolpyruvate + H2O = 3-deoxy-alpha-D-manno-2-octulosonate-8-phosphate + phosphate. It participates in carbohydrate biosynthesis; 3-deoxy-D-manno-octulosonate biosynthesis; 3-deoxy-D-manno-octulosonate from D-ribulose 5-phosphate: step 2/3. Its pathway is bacterial outer membrane biogenesis; lipopolysaccharide biosynthesis. The chain is 2-dehydro-3-deoxyphosphooctonate aldolase from Xylella fastidiosa (strain M23).